The following is a 243-amino-acid chain: Ubiquinone/menaquinone biosynthesis C-methyltransferase UbiE (243 aa).

Residues threonine 69, aspartate 90, and 116–117 each bind S-adenosyl-L-methionine; that span reads DA.

It belongs to the class I-like SAM-binding methyltransferase superfamily. MenG/UbiE family.

The catalysed reaction is a 2-demethylmenaquinol + S-adenosyl-L-methionine = a menaquinol + S-adenosyl-L-homocysteine + H(+). It carries out the reaction a 2-methoxy-6-(all-trans-polyprenyl)benzene-1,4-diol + S-adenosyl-L-methionine = a 5-methoxy-2-methyl-3-(all-trans-polyprenyl)benzene-1,4-diol + S-adenosyl-L-homocysteine + H(+). Its pathway is quinol/quinone metabolism; menaquinone biosynthesis; menaquinol from 1,4-dihydroxy-2-naphthoate: step 2/2. It participates in cofactor biosynthesis; ubiquinone biosynthesis. Its function is as follows. Methyltransferase required for the conversion of demethylmenaquinol (DMKH2) to menaquinol (MKH2) and the conversion of 2-polyprenyl-6-methoxy-1,4-benzoquinol (DDMQH2) to 2-polyprenyl-3-methyl-6-methoxy-1,4-benzoquinol (DMQH2). The chain is Ubiquinone/menaquinone biosynthesis C-methyltransferase UbiE from Ralstonia pickettii (strain 12J).